The primary structure comprises 199 residues: Putative ATP-dependent Clp protease proteolytic subunit-like (199 aa).

Belongs to the peptidase S14 family. As to quaternary structure, component of the chloroplastic Clp protease core complex.

It localises to the plastid. The protein resides in the cyanelle. Its function is as follows. Has lost the two conserved residues (Ser and His) proposed to be part of the active site. Therefore it could be inactive. The sequence is that of Putative ATP-dependent Clp protease proteolytic subunit-like (clpP-B) from Cyanophora paradoxa.